The following is a 367-amino-acid chain: Cell-death-related nuclease 7 (367 aa).

Positions 1 to 18 (MRLYFVLIFSVIFTTGNG) are cleaved as a signal peptide. N253 is a glycosylation site (N-linked (GlcNAc...) asparagine).

This sequence belongs to the DNase II family.

The polypeptide is Cell-death-related nuclease 7 (crn-7) (Caenorhabditis elegans).